A 468-amino-acid polypeptide reads, in one-letter code: UDP-N-acetylmuramate--L-alanine ligase (468 aa).

121 to 127 lines the ATP pocket; sequence GSHGKTT.

It belongs to the MurCDEF family.

It localises to the cytoplasm. The enzyme catalyses UDP-N-acetyl-alpha-D-muramate + L-alanine + ATP = UDP-N-acetyl-alpha-D-muramoyl-L-alanine + ADP + phosphate + H(+). It participates in cell wall biogenesis; peptidoglycan biosynthesis. Cell wall formation. In Borreliella afzelii (strain PKo) (Borrelia afzelii), this protein is UDP-N-acetylmuramate--L-alanine ligase.